Consider the following 191-residue polypeptide: Leucyl/phenylalanyl-tRNA--protein transferase (191 aa).

The protein belongs to the L/F-transferase family.

Its subcellular location is the cytoplasm. The catalysed reaction is N-terminal L-lysyl-[protein] + L-leucyl-tRNA(Leu) = N-terminal L-leucyl-L-lysyl-[protein] + tRNA(Leu) + H(+). It carries out the reaction N-terminal L-arginyl-[protein] + L-leucyl-tRNA(Leu) = N-terminal L-leucyl-L-arginyl-[protein] + tRNA(Leu) + H(+). The enzyme catalyses L-phenylalanyl-tRNA(Phe) + an N-terminal L-alpha-aminoacyl-[protein] = an N-terminal L-phenylalanyl-L-alpha-aminoacyl-[protein] + tRNA(Phe). Functions in the N-end rule pathway of protein degradation where it conjugates Leu, Phe and, less efficiently, Met from aminoacyl-tRNAs to the N-termini of proteins containing an N-terminal arginine or lysine. This chain is Leucyl/phenylalanyl-tRNA--protein transferase, found in Rubrobacter xylanophilus (strain DSM 9941 / JCM 11954 / NBRC 16129 / PRD-1).